The primary structure comprises 331 residues: Low affinity immunoglobulin epsilon Fc receptor (331 aa).

The Cytoplasmic segment spans residues 1 to 23 (MEENEYSGYWEPPRKRCCCARRG). S-palmitoyl cysteine attachment occurs at residues Cys17 and Cys18. A helical; Signal-anchor for type II membrane protein transmembrane segment spans residues 24-49 (TQLMLVGLLSTAMWAGLLALLLLWHW). Topologically, residues 50 to 331 (ETEKNLKQLG…PTRPTPKSEP (282 aa)) are extracellular. Asn65 is a glycosylation site (N-linked (GlcNAc...) asparagine). Repeats lie at residues 71-91 (KDLQKFQSNQLAQKSQVVQMS), 92-112 (QNLQELQAEQKQMKAQDSRLS), and 113-133 (QNLTGLQEDLRNAQSQNSKLS). Asn114 carries N-linked (GlcNAc...) asparagine glycosylation. 4 disulfides stabilise this stretch: Cys183–Cys311, Cys186–Cys197, Cys214–Cys305, and Cys282–Cys296. Residues 185 to 298 (ICPKNWLHFQ…GQWNDAFCRS (114 aa)) enclose the C-type lectin domain. Ca(2+) is bound by residues Glu272, Asn292, and Asp293. O-linked (Xyl...) (chondroitin sulfate) serine glycosylation is present at Ser319.

Homotrimer. Interacts (via C-type lectin domain) with IGHE (via CH3 region); this interaction regulates IgE homeostasis. Interacts (via C-terminus) with CR2/CD21 (via Sushi domain 1 and 2). In terms of processing, N- and O-glycosylated.

The protein localises to the cell membrane. It is found in the secreted. Functionally, low-affinity receptor for immunoglobulin E (IgE) and CR2/CD21. Has essential roles in the regulation of IgE production and in the differentiation of B cells. On B cells, initiates IgE-dependent antigen uptake and presentation to T cells. On macrophages, upon IgE binding and antigen cross-linking induces intracellular killing of parasites through activation of L-Arginine-nitric oxide pathway. This chain is Low affinity immunoglobulin epsilon Fc receptor (Fcer2), found in Mus musculus (Mouse).